Here is a 504-residue protein sequence, read N- to C-terminus: Argininosuccinate lyase 2 (504 aa).

The protein belongs to the lyase 1 family. Argininosuccinate lyase subfamily.

It is found in the cytoplasm. It catalyses the reaction 2-(N(omega)-L-arginino)succinate = fumarate + L-arginine. Its pathway is amino-acid biosynthesis; L-arginine biosynthesis; L-arginine from L-ornithine and carbamoyl phosphate: step 3/3. The sequence is that of Argininosuccinate lyase 2 from Agrobacterium fabrum (strain C58 / ATCC 33970) (Agrobacterium tumefaciens (strain C58)).